We begin with the raw amino-acid sequence, 61 residues long: Protein translocase subunit SecE (61 aa).

Over 1-34 (MAELQERIRHFWKESRRAFLVTKKPNWATYKRAA) the chain is Cytoplasmic. A helical transmembrane segment spans residues 35–55 (KITGLGIILIGLIGMLIRIVG). Over 56–61 (ILILGG) the chain is Extracellular.

The protein belongs to the SecE/SEC61-gamma family. In terms of assembly, component of the Sec protein translocase complex. Heterotrimer consisting of alpha (SecY), beta (SecG) and gamma (SecE) subunits. The heterotrimers can form oligomers, although 1 heterotrimer is thought to be able to translocate proteins. Interacts with the ribosome. May interact with SecDF, and other proteins may be involved.

The protein localises to the cell membrane. Essential subunit of the protein translocation channel SecYEG. Clamps together the 2 halves of SecY. May contact the channel plug during translocation. In Pyrococcus furiosus (strain ATCC 43587 / DSM 3638 / JCM 8422 / Vc1), this protein is Protein translocase subunit SecE.